The chain runs to 550 residues: Amino acid transporter AVT1C (550 aa).

Residues 1 to 11 are compositionally biased toward polar residues; sequence MNHVPSDQSFY. Disordered stretches follow at residues 1 to 44 and 128 to 148; these read MNHV…ENQA and QGLL…EKSS. Positions 20–34 are enriched in basic and acidic residues; sequence RKDYVEEDGGSHSDS. The next 11 helical transmembrane spans lie at 165–185, 190–210, 237–257, 283–303, 307–327, 342–362, 377–397, 422–442, 462–484, 488–510, and 521–541; these read AVLN…PYAA, WLGL…GILL, IFVS…YIIL, LFAL…DLSV, ISAG…WIGL, LSTL…HAVF, AVLL…AVMG, IAVW…ISPV, IGIR…FFGL, LIGS…LSIV, and LCVL…YSAL.

It belongs to the amino acid/polyamine transporter 2 family. Amino acid/auxin permease (AAAP) (TC 2.A.18.5) subfamily.

Its subcellular location is the membrane. The protein is Amino acid transporter AVT1C of Arabidopsis thaliana (Mouse-ear cress).